The chain runs to 517 residues: Crotonobetaine/carnitine--CoA ligase (517 aa).

This sequence belongs to the ATP-dependent AMP-binding enzyme family.

The enzyme catalyses 4-(trimethylamino)butanoate + ATP + CoA = 4-(trimethylamino)butanoyl-CoA + AMP + diphosphate. The catalysed reaction is crotonobetaine + ATP + CoA = crotonobetainyl-CoA + AMP + diphosphate. It catalyses the reaction (R)-carnitine + ATP + CoA = (R)-carnitinyl-CoA + AMP + diphosphate. It participates in amine and polyamine metabolism; carnitine metabolism. Its function is as follows. Catalyzes the transfer of CoA to carnitine, generating the initial carnitinyl-CoA needed for the CaiB reaction cycle. Also has activity toward crotonobetaine and gamma-butyrobetaine. This is Crotonobetaine/carnitine--CoA ligase from Shigella flexneri.